Reading from the N-terminus, the 629-residue chain is Hemocyanin G chain (629 aa).

Residues His-171, His-175, His-202, His-322, His-326, and His-362 each coordinate Cu cation. Asn-447 and Asn-506 each carry an N-linked (GlcNAc...) asparagine glycan. Cys-534 and Cys-582 form a disulfide bridge. A glycan (N-linked (GlcNAc...) asparagine) is linked at Asn-615.

Belongs to the tyrosinase family. Hemocyanin subfamily. Tarantula hemocyanin is a 24-chain polymer with seven different chains identified. As to expression, hemolymph.

The protein localises to the secreted. The protein resides in the extracellular space. Hemocyanins are copper-containing oxygen carriers occurring freely dissolved in the hemolymph of many mollusks and arthropods. This chain is Hemocyanin G chain (HCG), found in Aphonopelma sp. (American tarantula).